The sequence spans 81 residues: Sulfur carrier protein TusA (81 aa).

Cysteine 19 acts as the Cysteine persulfide intermediate in catalysis.

Belongs to the sulfur carrier protein TusA family. As to quaternary structure, interacts with IscS.

The protein localises to the cytoplasm. The protein operates within tRNA modification. Functionally, sulfur carrier protein involved in sulfur trafficking in the cell. Part of a sulfur-relay system required for 2-thiolation during synthesis of 2-thiouridine of the modified wobble base 5-methylaminomethyl-2-thiouridine (mnm(5)s(2)U) in tRNA. Interacts with IscS and stimulates its cysteine desulfurase activity. Accepts an activated sulfur from IscS, which is then transferred to TusD, and thus determines the direction of sulfur flow from IscS to 2-thiouridine formation. Also appears to be involved in sulfur transfer for the biosynthesis of molybdopterin. The protein is Sulfur carrier protein TusA of Serratia proteamaculans (strain 568).